A 92-amino-acid polypeptide reads, in one-letter code: Acylphosphatase (92 aa).

The region spanning 3–92 (TKHVLVSGIV…GPRSTHFEVT (90 aa)) is the Acylphosphatase-like domain. Residues R18 and N36 contribute to the active site.

Belongs to the acylphosphatase family.

It carries out the reaction an acyl phosphate + H2O = a carboxylate + phosphate + H(+). In Alcanivorax borkumensis (strain ATCC 700651 / DSM 11573 / NCIMB 13689 / SK2), this protein is Acylphosphatase (acyP).